Here is a 156-residue protein sequence, read N- to C-terminus: Small ribosomal subunit protein uS7 (156 aa).

It belongs to the universal ribosomal protein uS7 family. Part of the 30S ribosomal subunit. Contacts proteins S9 and S11.

One of the primary rRNA binding proteins, it binds directly to 16S rRNA where it nucleates assembly of the head domain of the 30S subunit. Is located at the subunit interface close to the decoding center, probably blocks exit of the E-site tRNA. The protein is Small ribosomal subunit protein uS7 of Heliobacterium modesticaldum (strain ATCC 51547 / Ice1).